The sequence spans 389 residues: Type III polyketide synthase 21 (389 aa).

Cys170 acts as the Nucleophile in catalysis.

This sequence belongs to the thiolase-like superfamily. Chalcone/stilbene synthases family. As to expression, expressed in anthers. Expressed in young and adult flowers.

Its function is as follows. Plant type III polyketide synthases (PKSs) that catalyzes the condensation of fatty acyl-CoA with malonyl-CoA to generate triketide and tetraketide alpha-pyrones, the main components of pollen exine and potential sporopollenin precursors. In Oryza sativa subsp. japonica (Rice), this protein is Type III polyketide synthase 21 (PKS21).